The chain runs to 427 residues: Interleukin-13 receptor subunit alpha-1 (427 aa).

Residues 1 to 21 form the signal peptide; it reads MEWPARLCGLWALLLCAGGGG. The Extracellular segment spans residues 22–343; sequence GGGGAAPTET…MSIGKKRNST (322 aa). Fibronectin type-III domains lie at 34-123, 128-226, and 227-339; these read PVTN…PPEG, AVTE…TSRV, and KPDP…IGKK. 2 N-linked (GlcNAc...) asparagine glycosylation sites follow: N37 and N61. Cystine bridges form between C62–C102, C95–C117, and C134–C144. 3 N-linked (GlcNAc...) asparagine glycosylation sites follow: N105, N138, and N157. Cysteines 173 and 185 form a disulfide. 5 N-linked (GlcNAc...) asparagine glycosylation sites follow: N235, N265, N293, N329, and N341. Intrachain disulfides connect C257/C320 and C282/C296. The WSXWS motif motif lies at 327–331; it reads WSNWS. Residues 344 to 367 traverse the membrane as a helical segment; sequence LYITMLLIVPVIVAGAIIVLLLYL. Residues 368 to 427 lie on the Cytoplasmic side of the membrane; it reads KRLKIIIFPPIPDPGKIFKEMFGDQNDDTLHWKKYDIYEKQTKEETDSVVLIENLKKASQ. The short motif at 374-382 is the Box 1 motif element; it reads IFPPIPDPG.

The protein belongs to the type I cytokine receptor family. Type 5 subfamily. As to quaternary structure, interleukin-13 receptor is a complex of IL4R, IL13RA1, and possibly other components. Interacts with TRAF3IP1. Interacts with IL4. In terms of tissue distribution, ubiquitous. Highest levels in heart, liver, skeletal muscle and ovary; lowest levels in brain, lung and kidney. Also found in B-cells, T-cells and endothelial cells.

The protein resides in the membrane. Its function is as follows. Binds with low affinity to interleukin-13 (IL13). Together with IL4RA can form a functional receptor for IL13. Also serves as an alternate accessory protein to the common cytokine receptor gamma chain for interleukin-4 (IL4) signaling, but cannot replace the function of IL2RG in allowing enhanced interleukin-2 (IL2) binding activity. In Homo sapiens (Human), this protein is Interleukin-13 receptor subunit alpha-1 (IL13RA1).